A 262-amino-acid polypeptide reads, in one-letter code: Aminoglycoside 3'-phosphotransferase (262 aa).

Catalysis depends on Asp187, which acts as the Proton acceptor.

The protein belongs to the aminoglycoside phosphotransferase family. Monomer.

The protein resides in the cytoplasm. It catalyses the reaction kanamycin A + ATP = kanamycin 3'-phosphate + ADP + H(+). Its function is as follows. Resistance to butirosin and structurally-related aminoglycosides, including kanamycin and amikacin. This chain is Aminoglycoside 3'-phosphotransferase, found in Niallia circulans (Bacillus circulans).